The chain runs to 461 residues: Phosphatidate cytidylyltransferase 1 (461 aa).

Residues 1 to 68 (MLELRHRGGC…PEVPPSSDRT (68 aa)) form a disordered region. Position 7 is an omega-N-methylarginine (R7). A compositionally biased stretch (basic and acidic residues) spans 22-56 (REGEAAGGDHETESTSDKETDIDDRYGDLDARGDS). Phosphoserine is present on residues S35 and S37. The next 6 membrane-spanning stretches (helical) occupy residues 96 to 116 (MISL…LLVL), 149 to 169 (FLLC…FATF), 183 to 203 (HRFI…LSLV), 230 to 250 (LVIQ…SSVI), 279 to 299 (GFIG…YVLS), and 357 to 377 (IALS…ASGF).

Belongs to the CDS family. As to quaternary structure, homodimer. Interacts with FOS; this interaction may enhance catalytic activity. Mg(2+) serves as cofactor. As to expression, brain, retina and testis. Found in cerebellar Purkinje cells, pineal body, inner segment of photoreceptor cells and postmitotic spermatocytes and spermatids.

Its subcellular location is the endoplasmic reticulum membrane. It catalyses the reaction a 1,2-diacyl-sn-glycero-3-phosphate + CTP + H(+) = a CDP-1,2-diacyl-sn-glycerol + diphosphate. The catalysed reaction is 1-octadecanoyl-2-(5Z,8Z,11Z,14Z-eicosatetraenoyl)-sn-glycero-3-phosphate + CTP + H(+) = 1-octadecanoyl-2-(5Z,8Z,11Z,14Z-eicosatetraenoyl)-sn-glycero-3-cytidine-5'-diphosphate + diphosphate. The enzyme catalyses 1-octadecanoyl-2-(9Z,12Z-octadecadienoyl)-sn-glycero-3-phosphate + CTP + H(+) = 1-octadecanoyl-2-(9Z,12Z-octadecadienoyl)-sn-glycero-3-cytidine-5'-diphosphate + diphosphate. It carries out the reaction 1-hexadecanoyl-2-(5Z,8Z,11Z,14Z-eicosatetraenoyl)-sn-glycero-3-phosphate + CTP + H(+) = 1-hexadecanoyl-2-(5Z,8Z,11Z,14Z-eicosatetraenoyl)-sn-glycero-3-cytidine-5'-diphosphate + diphosphate. It catalyses the reaction 1,2-di-(5Z,8Z,11Z,14Z)-eicosatetraenoyl-sn-glycero-3-phosphate + CTP + H(+) = 1,2-di-(5Z,8Z,11Z,14Z-eicosatetraenoyl)-sn-glycero-3-cytidine-5'-diphosphate + diphosphate. The catalysed reaction is 1-octadecanoyl-2-(9Z-octadecenoyl)-sn-glycero-3-phosphate + CTP + H(+) = 1-octadecanoyl-2-(9Z-octadecenoyl)-sn-glycero-3-cytidine-5'-diphosphate + diphosphate. The enzyme catalyses 1-octadecanoyl-2-(4Z,7Z,10Z,13Z,16Z,19Z-docosahexaenoyl)-sn-glycero-3-phosphate + CTP + H(+) = 1-octadecanoyl-2-(4Z,7Z,10Z,13Z,16Z,19Z-docosahexaenoyl)-sn-glycero-3-cytidine-5'-diphosphate + diphosphate. It carries out the reaction 1,2-di-(9Z,12Z-octadecadienoyl)-sn-glycero-3-phosphate + CTP + H(+) = 1,2-di-(9Z,12Z-octadecadienoyl)-sn-glycero-3-cytidine-5'-diphosphate + diphosphate. It catalyses the reaction 1,2-di-(9Z-octadecenoyl)-sn-glycero-3-phosphate + CTP + H(+) = 1,2-di-(9Z-octadecenoyl)-sn-glycero-3-cytidine-5'-diphosphate + diphosphate. It functions in the pathway phospholipid metabolism; CDP-diacylglycerol biosynthesis; CDP-diacylglycerol from sn-glycerol 3-phosphate: step 3/3. Activated by GTP. Inhibited by CDP-diacylglycerol and by phosphatidylglycerol 4,5-bisphosphate (PPI2). Functionally, catalyzes the conversion of phosphatidic acid (PA) to CDP-diacylglycerol (CDP-DAG), an essential intermediate in the synthesis of phosphatidylglycerol, cardiolipin and phosphatidylinositol. Exhibits almost no acyl chain preference for PA, showing no discrimination for the sn-1/sn-2 acyl chain composition of PAs. Plays an important role in regulatinng the growth of lipid droplets which are storage organelles at the center of lipid and energy homeostasis. Positively regulates the differentiation and development of adipocytes. The protein is Phosphatidate cytidylyltransferase 1 of Rattus norvegicus (Rat).